A 288-amino-acid polypeptide reads, in one-letter code: Small ribosomal subunit protein uS3 (288 aa).

One can recognise a KH type-2 domain in the interval 38–106 (IRRMMSKGLE…QVQLNIIEVK (69 aa)). Residues 209-288 (PGRETPAEAP…TQPAETQQEG (80 aa)) are disordered. The segment covering 219-232 (SRPRRERGDRSERP) has biased composition (basic and acidic residues). Residues 249–264 (AGRAAATTIAQAAETP) show a composition bias toward low complexity. The segment covering 277 to 288 (AATQPAETQQEG) has biased composition (polar residues).

It belongs to the universal ribosomal protein uS3 family. Part of the 30S ribosomal subunit. Forms a tight complex with proteins S10 and S14.

Its function is as follows. Binds the lower part of the 30S subunit head. Binds mRNA in the 70S ribosome, positioning it for translation. The sequence is that of Small ribosomal subunit protein uS3 from Salinispora tropica (strain ATCC BAA-916 / DSM 44818 / JCM 13857 / NBRC 105044 / CNB-440).